The chain runs to 176 residues: Phosphopantetheine adenylyltransferase (176 aa).

T11 lines the substrate pocket. ATP-binding positions include 11–12 (TF) and H19. K43, L93, and R107 together coordinate substrate. Residues E117 and 141–147 (LSVVSSS) contribute to the ATP site.

It belongs to the bacterial CoaD family. As to quaternary structure, homohexamer. Mg(2+) is required as a cofactor.

The protein localises to the cytoplasm. The catalysed reaction is (R)-4'-phosphopantetheine + ATP + H(+) = 3'-dephospho-CoA + diphosphate. The protein operates within cofactor biosynthesis; coenzyme A biosynthesis; CoA from (R)-pantothenate: step 4/5. Functionally, reversibly transfers an adenylyl group from ATP to 4'-phosphopantetheine, yielding dephospho-CoA (dPCoA) and pyrophosphate. The chain is Phosphopantetheine adenylyltransferase from Tropheryma whipplei (strain TW08/27) (Whipple's bacillus).